Reading from the N-terminus, the 445-residue chain is Glucose-6-phosphate isomerase (445 aa).

The Proton donor role is filled by Glu-284. Catalysis depends on residues His-305 and Lys-419.

This sequence belongs to the GPI family.

The protein resides in the cytoplasm. The catalysed reaction is alpha-D-glucose 6-phosphate = beta-D-fructose 6-phosphate. Its pathway is carbohydrate biosynthesis; gluconeogenesis. It participates in carbohydrate degradation; glycolysis; D-glyceraldehyde 3-phosphate and glycerone phosphate from D-glucose: step 2/4. Its function is as follows. Catalyzes the reversible isomerization of glucose-6-phosphate to fructose-6-phosphate. This Leptospira borgpetersenii serovar Hardjo-bovis (strain JB197) protein is Glucose-6-phosphate isomerase.